The primary structure comprises 576 residues: Probable metalloreductase AIM14 (576 aa).

7 helical membrane passes run I21 to L41, A70 to L90, L101 to R118, I142 to D162, F177 to M197, L204 to S224, and F230 to F250. The region spanning L101–L219 is the Ferric oxidoreductase domain. Positions F250 to P388 constitute an FAD-binding FR-type domain. The span at I480–N505 shows a compositional bias: polar residues. The segment at I480 to S507 is disordered.

This sequence belongs to the ferric reductase (FRE) family. AIM14 subfamily. As to quaternary structure, interacts with ribosomes.

It localises to the membrane. Probable cell surface metalloreductase. May be involved in iron or copper homeostasis. The polypeptide is Probable metalloreductase AIM14 (AIM14) (Saccharomyces cerevisiae (strain Lalvin EC1118 / Prise de mousse) (Baker's yeast)).